The primary structure comprises 59 residues: UPF0391 membrane protein GbCGDNIH1_2123 (59 aa).

Transmembrane regions (helical) follow at residues 6–26 and 35–55; these read LALF…TGIS and ILFV…LAAG.

The protein belongs to the UPF0391 family.

The protein localises to the cell membrane. In Granulibacter bethesdensis (strain ATCC BAA-1260 / CGDNIH1), this protein is UPF0391 membrane protein GbCGDNIH1_2123.